Reading from the N-terminus, the 578-residue chain is Proteasome-associated ATPase (578 aa).

A coiled-coil region spans residues 35 to 84 (RHLTALEEQLGAARTRLAQVSAQNDRLATTLREARDQIVALKAEVDRLGQ). 266–271 (GCGKTL) is a binding site for ATP. The segment at 577–578 (YL) is docks into pockets in the proteasome alpha-ring.

Belongs to the AAA ATPase family. Homohexamer. Assembles into a hexameric ring structure that caps the 20S proteasome core. Strongly interacts with the prokaryotic ubiquitin-like protein Pup through a hydrophobic interface; the interacting region of ARC lies in its N-terminal coiled-coil domain. There is one Pup binding site per ARC hexamer ring. Upon ATP-binding, the C-terminus of ARC interacts with the alpha-rings of the proteasome core, possibly by binding to the intersubunit pockets.

Its pathway is protein degradation; proteasomal Pup-dependent pathway. ATPase which is responsible for recognizing, binding, unfolding and translocation of pupylated proteins into the bacterial 20S proteasome core particle. May be essential for opening the gate of the 20S proteasome via an interaction with its C-terminus, thereby allowing substrate entry and access to the site of proteolysis. Thus, the C-termini of the proteasomal ATPase may function like a 'key in a lock' to induce gate opening and therefore regulate proteolysis. The chain is Proteasome-associated ATPase from Kineococcus radiotolerans (strain ATCC BAA-149 / DSM 14245 / SRS30216).